A 485-amino-acid chain; its full sequence is Glutamyl-tRNA(Gln) amidotransferase subunit A (485 aa).

Active-site charge relay system residues include Lys-78 and Ser-153. The active-site Acyl-ester intermediate is Ser-177.

It belongs to the amidase family. GatA subfamily. In terms of assembly, heterotrimer of A, B and C subunits.

It catalyses the reaction L-glutamyl-tRNA(Gln) + L-glutamine + ATP + H2O = L-glutaminyl-tRNA(Gln) + L-glutamate + ADP + phosphate + H(+). Its function is as follows. Allows the formation of correctly charged Gln-tRNA(Gln) through the transamidation of misacylated Glu-tRNA(Gln) in organisms which lack glutaminyl-tRNA synthetase. The reaction takes place in the presence of glutamine and ATP through an activated gamma-phospho-Glu-tRNA(Gln). The polypeptide is Glutamyl-tRNA(Gln) amidotransferase subunit A (Bacillus cereus (strain ATCC 14579 / DSM 31 / CCUG 7414 / JCM 2152 / NBRC 15305 / NCIMB 9373 / NCTC 2599 / NRRL B-3711)).